The primary structure comprises 379 residues: Alanine racemase (379 aa).

Lys-40 acts as the Proton acceptor; specific for D-alanine in catalysis. Residue Lys-40 is modified to N6-(pyridoxal phosphate)lysine. Arg-138 lines the substrate pocket. Catalysis depends on Tyr-267, which acts as the Proton acceptor; specific for L-alanine. Position 315 (Met-315) interacts with substrate.

The protein belongs to the alanine racemase family. The cofactor is pyridoxal 5'-phosphate.

The enzyme catalyses L-alanine = D-alanine. It functions in the pathway amino-acid biosynthesis; D-alanine biosynthesis; D-alanine from L-alanine: step 1/1. Its function is as follows. Catalyzes the interconversion of L-alanine and D-alanine. May also act on other amino acids. This is Alanine racemase (alr) from Halothermothrix orenii (strain H 168 / OCM 544 / DSM 9562).